The primary structure comprises 443 residues: Probable glycine dehydrogenase (decarboxylating) subunit 1 (443 aa).

It belongs to the GcvP family. N-terminal subunit subfamily. The glycine cleavage system is composed of four proteins: P, T, L and H. In this organism, the P 'protein' is a heterodimer of two subunits.

The enzyme catalyses N(6)-[(R)-lipoyl]-L-lysyl-[glycine-cleavage complex H protein] + glycine + H(+) = N(6)-[(R)-S(8)-aminomethyldihydrolipoyl]-L-lysyl-[glycine-cleavage complex H protein] + CO2. Its function is as follows. The glycine cleavage system catalyzes the degradation of glycine. The P protein binds the alpha-amino group of glycine through its pyridoxal phosphate cofactor; CO(2) is released and the remaining methylamine moiety is then transferred to the lipoamide cofactor of the H protein. This is Probable glycine dehydrogenase (decarboxylating) subunit 1 from Nitratidesulfovibrio vulgaris (strain DP4) (Desulfovibrio vulgaris).